Reading from the N-terminus, the 269-residue chain is 4-hydroxy-tetrahydrodipicolinate reductase (269 aa).

Residues 12–17, 102–104, and 126–129 contribute to the NAD(+) site; these read GGSGRM, GTT, and SPNM. H159 functions as the Proton donor/acceptor in the catalytic mechanism. H160 is a binding site for (S)-2,3,4,5-tetrahydrodipicolinate. K163 serves as the catalytic Proton donor. 169–170 is a (S)-2,3,4,5-tetrahydrodipicolinate binding site; it reads GT.

This sequence belongs to the DapB family.

Its subcellular location is the cytoplasm. The enzyme catalyses (S)-2,3,4,5-tetrahydrodipicolinate + NAD(+) + H2O = (2S,4S)-4-hydroxy-2,3,4,5-tetrahydrodipicolinate + NADH + H(+). It carries out the reaction (S)-2,3,4,5-tetrahydrodipicolinate + NADP(+) + H2O = (2S,4S)-4-hydroxy-2,3,4,5-tetrahydrodipicolinate + NADPH + H(+). The protein operates within amino-acid biosynthesis; L-lysine biosynthesis via DAP pathway; (S)-tetrahydrodipicolinate from L-aspartate: step 4/4. In terms of biological role, catalyzes the conversion of 4-hydroxy-tetrahydrodipicolinate (HTPA) to tetrahydrodipicolinate. In Leptospira borgpetersenii serovar Hardjo-bovis (strain JB197), this protein is 4-hydroxy-tetrahydrodipicolinate reductase.